The primary structure comprises 578 residues: MKYVVVSGGVISGIGKGVLASSTGMLLKTLGLKVTSIKIDPYMNIDAGTMSPLEHGECFVLDDGGETDLDLGNYERYLGITLSRDHNITTGKIYSHVISRERRGDYLGKTVQIVPHLTNAIQDWIQRVSKIPVDDTGLEPDVCIIELGGTVGDIESAPFVEALRQFQFEVGRENFALIHVSLVPVIHGEQKTKPTQAAIKDLRSLGLIPDMIACRCSEELNRSTIDKIAMFCHVGPEQVVNVHDVNSTYHVPLLLLKQHMIDYLHSRLKLGEVPLTLEDKERGSQLLTNWENMTKNLDDSDDVVKIALVGKYTNLKDSYLSVTKSLEHASMKCRRQLEILWVEASNLEPETQEVDKNKFHDSWNKLSSADGILVPGGFGTRGIEGMILAAKWARESGVPFLGVCLGLQVAAIEFARNVIGRPNSSSTEFLDETLLAPEDQVVIYMPEIDKEHMGGTMRLGLRPTIFQPNSEWSNIRKLYGEVNEVHERHRHRYEINPKIVNDMESRGFIFVGKDETGQRCEIFELKGHPYYVGTQYHPEYTSKVLEPSRPFWGLVAAASGTLGEVIKDINLSEGNENE.

Positions 305–564 (KIALVGKYTN…VAAASGTLGE (260 aa)) constitute a Glutamine amidotransferase type-1 domain. Catalysis depends on for GATase activity residues Cys404, His537, and Glu539.

The protein belongs to the CTP synthase family. As to quaternary structure, homodimer. Oligomerizes to a tetramer in the presence of its substrates UTP and ATP. The cofactor is Mg(2+).

Its subcellular location is the cytoplasm. The catalysed reaction is UTP + L-glutamine + ATP + H2O = CTP + L-glutamate + ADP + phosphate + 2 H(+). The protein operates within pyrimidine metabolism; CTP biosynthesis via de novo pathway; CTP from UDP: step 2/2. With respect to regulation, activated by GTP. Subject to allosteric product inhibition by CTP. Inhibited by p-chloromercuriphenylsulfonic acid, N-ethylmaleimide and cyclopentenylcytosine (CPEC). Its function is as follows. Catalyzes the ATP-dependent amination of UTP to CTP with either L-glutamine or ammonia as the source of nitrogen. Plays an important role in the regulation of phospholipid synthesis. The protein is CTP synthase 2 (URA8) of Saccharomyces cerevisiae (strain ATCC 204508 / S288c) (Baker's yeast).